The following is a 170-amino-acid chain: NADH-quinone oxidoreductase subunit B (170 aa).

Residues C37, C38, C102, and C131 each coordinate [4Fe-4S] cluster.

Belongs to the complex I 20 kDa subunit family. NDH-1 is composed of 14 different subunits. Subunits NuoB, C, D, E, F, and G constitute the peripheral sector of the complex. The cofactor is [4Fe-4S] cluster.

The protein localises to the cell inner membrane. It carries out the reaction a quinone + NADH + 5 H(+)(in) = a quinol + NAD(+) + 4 H(+)(out). Its function is as follows. NDH-1 shuttles electrons from NADH, via FMN and iron-sulfur (Fe-S) centers, to quinones in the respiratory chain. The immediate electron acceptor for the enzyme in this species is believed to be ubiquinone. Couples the redox reaction to proton translocation (for every two electrons transferred, four hydrogen ions are translocated across the cytoplasmic membrane), and thus conserves the redox energy in a proton gradient. The chain is NADH-quinone oxidoreductase subunit B from Geobacter metallireducens (strain ATCC 53774 / DSM 7210 / GS-15).